The primary structure comprises 139 residues: MLDKLQNTFHFQQEALSLRNKRQEILAANIANADTPGFQARDIDFAAELKKTMENGRTGSHGLQLTMTSERHIPIKPGYRLEADLLYRVPHQTSMDGNTVDMDMERSNLYVPDNSVKYLADVTFINSQVKSMMAVLQQG.

It belongs to the flagella basal body rod proteins family. The basal body constitutes a major portion of the flagellar organelle and consists of a number of rings mounted on a central rod. In Gram-negative bacteria, at least four rings, L, P, S and M are present, whereas Gram-positive bacteria lack the L and P rings. The rod consists of about 26 subunits of FlgG in the distal portion, and FlgB, FlgC and FlgF build up the proximal portion of the rod with about 6 subunits each. Rod assembly occurs by export via the flagellum-specific pathway of its constituent proteins and by their incorporation into the rod structure in the probable order of FlgB, FlgC, FlgF and FlgG. Another protein, FliE, also assembles onto the stable rod structure.

Its subcellular location is the bacterial flagellum basal body. In terms of biological role, structural component of flagellum, the bacterial motility apparatus. Part of the rod structure of flagellar basal body. The sequence is that of Flagellar basal body rod protein FlgB from Proteus mirabilis.